The chain runs to 1098 residues: WD repeat-containing protein 72 (1098 aa).

WD repeat units follow at residues Ala15–Ala54, Gly60–Lys102, Trp158–Gln196, Glu315–Phe359, Ala399–Leu438, Gly456–Lys501, Leu504–Arg549, and Lys552–His591. Phosphoserine is present on residues Ser1077 and Ser1079.

The protein localises to the cytoplasmic vesicle. Its function is as follows. Plays a major role in formation of tooth enamel. Specifically required during the maturation phase of amelogenesis for normal formation of the enamel matrix and clearance of enamel proteins. May be involved in localization of the calcium transporter SLC24A4 to the ameloblast cell membrane. This is WD repeat-containing protein 72 (WDR72) from Pongo abelii (Sumatran orangutan).